The chain runs to 129 residues: Large ribosomal subunit protein bL21 (129 aa).

Residues 102-129 (TDNAKPTKGPRPKKEKVAKEATKEDAAA) form a disordered region. A compositionally biased stretch (basic and acidic residues) spans 116–129 (EKVAKEATKEDAAA).

It belongs to the bacterial ribosomal protein bL21 family. Part of the 50S ribosomal subunit. Contacts protein L20.

This protein binds to 23S rRNA in the presence of protein L20. The sequence is that of Large ribosomal subunit protein bL21 from Bradyrhizobium diazoefficiens (strain JCM 10833 / BCRC 13528 / IAM 13628 / NBRC 14792 / USDA 110).